Here is a 975-residue protein sequence, read N- to C-terminus: Protein cramped (975 aa).

Disordered stretches follow at residues Met1–Ala37, Gln71–Lys111, Ala318–Ala346, Pro403–Met450, and Pro809–Gly844. Residues Gln7–Ser20 show a composition bias toward pro residues. A compositionally biased stretch (basic and acidic residues) spans Ser86–Ala98. Over residues Lys100–Lys111 the composition is skewed to polar residues. Residues Ser109–Cys173 enclose the SANT domain. Over residues Leu410–Lys425 the composition is skewed to basic and acidic residues. Low complexity predominate over residues Gly815–Gly833.

The protein belongs to the cramped family.

The protein resides in the nucleus. Functionally, polycomb group (Pc-G) genes are needed to maintain expression patterns of the homeotic selector genes of the Antennapedia (Antp-C) and Bithorax (Bx-C) complexes, and hence for the maintenance of segmental determination. Can act as a modifier of position effect variegation (PEV). The chain is Protein cramped (crm) from Drosophila sechellia (Fruit fly).